The sequence spans 125 residues: Small ribosomal subunit protein eS6 (125 aa).

This sequence belongs to the eukaryotic ribosomal protein eS6 family.

This is Small ribosomal subunit protein eS6 from Pyrococcus abyssi (strain GE5 / Orsay).